The sequence spans 538 residues: Bifunctional purine biosynthesis protein PurH (538 aa).

One can recognise an MGS-like domain in the interval isoleucine 8–threonine 158.

This sequence belongs to the PurH family.

It carries out the reaction (6R)-10-formyltetrahydrofolate + 5-amino-1-(5-phospho-beta-D-ribosyl)imidazole-4-carboxamide = 5-formamido-1-(5-phospho-D-ribosyl)imidazole-4-carboxamide + (6S)-5,6,7,8-tetrahydrofolate. The enzyme catalyses IMP + H2O = 5-formamido-1-(5-phospho-D-ribosyl)imidazole-4-carboxamide. It functions in the pathway purine metabolism; IMP biosynthesis via de novo pathway; 5-formamido-1-(5-phospho-D-ribosyl)imidazole-4-carboxamide from 5-amino-1-(5-phospho-D-ribosyl)imidazole-4-carboxamide (10-formyl THF route): step 1/1. It participates in purine metabolism; IMP biosynthesis via de novo pathway; IMP from 5-formamido-1-(5-phospho-D-ribosyl)imidazole-4-carboxamide: step 1/1. This Rhizobium leguminosarum bv. trifolii (strain WSM2304) protein is Bifunctional purine biosynthesis protein PurH.